We begin with the raw amino-acid sequence, 350 residues long: Streptomycin biosynthesis operon possible regulatory protein (350 aa).

Polar residues predominate over residues 1 to 10; that stretch reads MEHISGNSPE. 3 disordered regions span residues 1–20, 168–189, and 211–258; these read MEHI…AAVT, AGVP…LDPT, and AAQA…SRAD. Basic and acidic residues-rich tracts occupy residues 177–189 and 223–242; these read IGRD…LDPT and DVRK…DRQQ.

This Streptomyces griseus protein is Streptomycin biosynthesis operon possible regulatory protein (strR).